The sequence spans 525 residues: NAD(P)H-quinone oxidoreductase chain 4-2 (525 aa).

The next 14 membrane-spanning stretches (helical) occupy residues phenylalanine 6–isoleucine 26, tryptophan 36–serine 56, leucine 91–leucine 111, leucine 115–aspartate 135, leucine 137–tryptophan 157, phenylalanine 169–phenylalanine 189, leucine 212–histidine 232, threonine 243–isoleucine 263, phenylalanine 277–phenylalanine 297, methionine 314–leucine 334, glutamine 335–aspartate 355, isoleucine 375–alanine 397, valine 417–methionine 437, and valine 464–leucine 484.

This sequence belongs to the complex I subunit 4 family.

The protein localises to the cellular thylakoid membrane. It catalyses the reaction a plastoquinone + NADH + (n+1) H(+)(in) = a plastoquinol + NAD(+) + n H(+)(out). It carries out the reaction a plastoquinone + NADPH + (n+1) H(+)(in) = a plastoquinol + NADP(+) + n H(+)(out). Functionally, NDH-1 shuttles electrons from NAD(P)H, via FMN and iron-sulfur (Fe-S) centers, to quinones in the respiratory chain. The immediate electron acceptor for the enzyme in this species is believed to be plastoquinone. Couples the redox reaction to proton translocation (for every two electrons transferred, four hydrogen ions are translocated across the cytoplasmic membrane), and thus conserves the redox energy in a proton gradient. In Nostoc sp. (strain PCC 7120 / SAG 25.82 / UTEX 2576), this protein is NAD(P)H-quinone oxidoreductase chain 4-2 (ndhD2).